Consider the following 89-residue polypeptide: HssA/B-like protein 15 (89 aa).

It belongs to the hssA/B family.

The chain is HssA/B-like protein 15 (hssl15) from Dictyostelium discoideum (Social amoeba).